The following is a 148-amino-acid chain: Large ribosomal subunit protein bL9 (148 aa).

The protein belongs to the bacterial ribosomal protein bL9 family.

Binds to the 23S rRNA. The protein is Large ribosomal subunit protein bL9 of Campylobacter concisus (strain 13826).